The primary structure comprises 378 residues: Pulmonary surfactant-associated protein D (378 aa).

A signal peptide spans 1–20 (MLLLPLSVLILLTQPPRSLG). 2 positions are modified to S-nitrosocysteine: cysteine 35 and cysteine 40. The segment at 43–221 (MENGLPGRDG…ERGAKGESGL (179 aa)) is disordered. Residues 46–222 (GLPGRDGRDG…RGAKGESGLP (177 aa)) enclose the Collagen-like domain. A compositionally biased stretch (basic and acidic residues) spans 50–65 (RDGRDGREGPRGEKGD). A 4-hydroxyproline modification is found at proline 78. At lysine 87 the chain carries 5-hydroxylysine. A glycan (N-linked (GlcNAc...) asparagine) is linked at asparagine 90. Proline 96 carries the 4-hydroxyproline modification. Lysine 99 is subject to 5-hydroxylysine. Over residues 105 to 114 (CGPPGPPGIP) the composition is skewed to pro residues. Residues 137-146 (PKGETGPKGE) show a composition bias toward low complexity. 4-hydroxyproline occurs at positions 171 and 177. Residues 173–197 (ERGAPGSAGAAGPAGATGPQGPSGA) show a composition bias toward low complexity. The span at 204 to 216 (KGDRGPPGERGAK) shows a compositional bias: basic and acidic residues. Residues 223-254 (GITALRQQVETLQGQVQRLQKAFSQYKKVELF) are a coiled coil. In terms of domain architecture, C-type lectin spans 260 to 378 (VGEKIFKTGG…GELRLVICEF (119 aa)). 2 disulfide bridges follow: cysteine 281/cysteine 376 and cysteine 354/cysteine 368. N-linked (GlcNAc...) asparagine glycosylation is present at asparagine 323.

The protein belongs to the SFTPD family. As to quaternary structure, oligomeric complex of 4 set of homotrimers. In terms of processing, hydroxylation on proline residues within the sequence motif, GXPG, is most likely to be 4-hydroxy as this fits the requirement for 4-hydroxylation in vertebrates. Post-translationally, S-nitrosylation at Cys-35 and Cys-40 alters the quaternary structure which results in a pro-inflammatory chemoattractive signaling activity with macrophages.

It is found in the secreted. The protein resides in the extracellular space. Its subcellular location is the extracellular matrix. The protein localises to the surface film. In terms of biological role, contributes to the lung's defense against inhaled microorganisms, organic antigens and toxins. Interacts with compounds such as bacterial lipopolysaccharides, oligosaccharides and fatty acids and modulates leukocyte action in immune response. May participate in the extracellular reorganization or turnover of pulmonary surfactant. Binds strongly maltose residues and to a lesser extent other alpha-glucosyl moieties. The polypeptide is Pulmonary surfactant-associated protein D (SFTPD) (Sus scrofa (Pig)).